Here is a 202-residue protein sequence, read N- to C-terminus: Orotate phosphoribosyltransferase (202 aa).

5-phospho-alpha-D-ribose 1-diphosphate is bound by residues lysine 93 and 113 to 121 (EDIITTGGS). Orotate-binding residues include threonine 117 and arginine 145.

This sequence belongs to the purine/pyrimidine phosphoribosyltransferase family. PyrE subfamily. In terms of assembly, homodimer. Mg(2+) serves as cofactor.

It catalyses the reaction orotidine 5'-phosphate + diphosphate = orotate + 5-phospho-alpha-D-ribose 1-diphosphate. It participates in pyrimidine metabolism; UMP biosynthesis via de novo pathway; UMP from orotate: step 1/2. Its function is as follows. Catalyzes the transfer of a ribosyl phosphate group from 5-phosphoribose 1-diphosphate to orotate, leading to the formation of orotidine monophosphate (OMP). The chain is Orotate phosphoribosyltransferase from Campylobacter jejuni subsp. jejuni serotype O:23/36 (strain 81-176).